Here is a 407-residue protein sequence, read N- to C-terminus: B3 domain-containing protein Os07g0183200 (407 aa).

The TF-B3 DNA-binding region spans 124–227; the sequence is FVKTLMISDF…ELYVGVRRQR (104 aa).

It is found in the nucleus. The polypeptide is B3 domain-containing protein Os07g0183200 (Oryza sativa subsp. japonica (Rice)).